A 462-amino-acid polypeptide reads, in one-letter code: A-type ATP synthase subunit B (462 aa).

Belongs to the ATPase alpha/beta chains family. As to quaternary structure, has multiple subunits with at least A(3), B(3), C, D, E, F, H, I and proteolipid K(x).

It localises to the cell membrane. Functionally, component of the A-type ATP synthase that produces ATP from ADP in the presence of a proton gradient across the membrane. The B chain is a regulatory subunit. The chain is A-type ATP synthase subunit B from Methanobrevibacter smithii (strain ATCC 35061 / DSM 861 / OCM 144 / PS).